The following is a 637-amino-acid chain: Anthranilate synthase, phenazine specific (637 aa).

The tract at residues 1-434 is anthranilate synthase component I; the sequence is MSQTAAHLME…QREQIQADFS (434 aa). In terms of domain architecture, Glutamine amidotransferase type-1 spans 437 to 628; the sequence is QVLIVDAEDT…LRHALIHTPV (192 aa). Catalysis depends on for GATase activity residues Cys-517, His-602, and Glu-604.

It carries out the reaction chorismate + L-glutamine = anthranilate + pyruvate + L-glutamate + H(+). Its pathway is antibiotic biosynthesis; phenazine biosynthesis. In terms of biological role, involved in the biosynthesis of the antibiotic, phenazine, a nitrogen-containing heterocyclic molecule having important roles in virulence, competition and biological control. The chain is Anthranilate synthase, phenazine specific (phzB) from Pseudomonas chlororaphis (Pseudomonas aureofaciens).